The sequence spans 373 residues: Polygalacturonase (373 aa).

Residues Met-1–Arg-24 form the signal peptide. A disulfide bridge links Cys-27 with Cys-42. Residues Asn-65 and Asn-94 are each glycosylated (N-linked (GlcNAc...) asparagine). PbH1 repeat units lie at residues Thr-136–Gly-158, Ser-159–Ser-197, Ser-198–Ser-219, Gly-220–Ser-240, Val-249–Ser-270, Ile-278–Gln-300, Thr-312–Ala-333, and Cys-345–Asn-369. Asp-212 (proton donor) is an active-site residue. Cys-214 and Cys-230 are joined by a disulfide. His-234 is a catalytic residue. N-linked (GlcNAc...) asparagine glycosylation is found at Asn-280 and Asn-290. 2 disulfide bridges follow: Cys-340/Cys-345 and Cys-364/Cys-371.

This sequence belongs to the glycosyl hydrolase 28 family.

Its subcellular location is the secreted. The catalysed reaction is (1,4-alpha-D-galacturonosyl)n+m + H2O = (1,4-alpha-D-galacturonosyl)n + (1,4-alpha-D-galacturonosyl)m.. Involved in maceration and soft-rotting of plant tissue. Hydrolyzes the 1,4-alpha glycosidic bonds of de-esterified pectate in the smooth region of the plant cell wall. This chain is Polygalacturonase (PGA), found in Fusarium fujikuroi (Bakanae and foot rot disease fungus).